A 163-amino-acid chain; its full sequence is Glyoxalase domain-containing protein 5 (163 aa).

The 121-residue stretch at 41–161 folds into the VOC domain; sequence HLDHLVLTVR…DDNLIEVSNY (121 aa).

It belongs to the glyoxalase I family.

The chain is Glyoxalase domain-containing protein 5 (glod5) from Danio rerio (Zebrafish).